Consider the following 378-residue polypeptide: S-(hydroxymethyl)glutathione dehydrogenase (378 aa).

Residues C49, H71, C101, C104, C107, C115, and C178 each contribute to the Zn(2+) site.

This sequence belongs to the zinc-containing alcohol dehydrogenase family. Class-III subfamily. As to quaternary structure, homodimer. It depends on Zn(2+) as a cofactor.

It is found in the cytoplasm. It catalyses the reaction S-(hydroxymethyl)glutathione + NADP(+) = S-formylglutathione + NADPH + H(+). It carries out the reaction S-(hydroxymethyl)glutathione + NAD(+) = S-formylglutathione + NADH + H(+). The enzyme catalyses a primary alcohol + NAD(+) = an aldehyde + NADH + H(+). The catalysed reaction is a secondary alcohol + NAD(+) = a ketone + NADH + H(+). It catalyses the reaction S-nitrosoglutathione + NADH + H(+) = S-(hydroxysulfenamide)glutathione + NAD(+). Its function is as follows. Has high formaldehyde dehydrogenase activity in the presence of glutathione and catalyzes the oxidation of normal alcohols in a reaction that is not GSH-dependent. In addition, hemithiolacetals other than those formed from GSH, including omega-thiol fatty acids, also are substrates. Also acts as a S-nitroso-glutathione reductase by catalyzing the NADH-dependent reduction of S-nitrosoglutathione. This is S-(hydroxymethyl)glutathione dehydrogenase (frmA) from Haemophilus influenzae (strain ATCC 51907 / DSM 11121 / KW20 / Rd).